The sequence spans 187 residues: UPF0340 protein str1894 (187 aa).

Belongs to the UPF0340 family.

This Streptococcus thermophilus (strain CNRZ 1066) protein is UPF0340 protein str1894.